Reading from the N-terminus, the 718-residue chain is Kinesin-like protein KIF2C (718 aa).

The interval 1 to 248 (MESLPARLFP…CHPLTLTDPT (248 aa)) is globular. Residues serine 3 and serine 19 each carry the phosphoserine modification. The tract at residues 86 to 111 (PKQKRRSVNSKIPAPKEGLRSRSTRM) is disordered. Serine 92 carries the post-translational modification Phosphoserine; by AURKB. A Microtubule tip localization signal motif is present at residues 95-98 (SKIP). Residues serine 106, serine 108, serine 112, serine 163, and serine 186 each carry the phosphoserine modification. Residues 201 to 232 (EKRAQNSEIRIKRAQEYDSSFPNWEFARMIKE) form a negative regulator of microtubule-binding region. One can recognise a Kinesin motor domain in the interval 252–582 (RICVCVRKRP…LRYADRVKEL (331 aa)). Residues arginine 258 and 342–349 (GQTGSGKT) contribute to the ATP site. Residues 409 to 412 (KKAK) carry the Nuclear localization signal motif. Phosphoserine is present on residues serine 513 and serine 626. Coiled-coil stretches lie at residues 613–651 (NFKE…IIQQ) and 689–716 (ALRE…SKKR).

It belongs to the TRAFAC class myosin-kinesin ATPase superfamily. Kinesin family. MCAK/KIF2 subfamily. Interacts with CENPH. Interacts with MTUS2/TIP150; the interaction is direct. Interacts with MAPRE1; the interaction is direct, regulated by phosphorylation and is probably required for targeting to growing microtubule plus ends. Interacts with KIF18B at microtubule tips; this interaction increases the affinity of both partners for microtubule plus ends and is required for robust microtubule depolymerization. Phosphorylation by AURKA or AURKB strongly reduces KIF18B-binding. Post-translationally, phosphorylation by AURKB, regulates association with centromeres and kinetochores and the microtubule depolymerization activity. Ubiquitinated.

It is found in the cytoplasm. It localises to the cytoskeleton. The protein localises to the nucleus. Its subcellular location is the chromosome. The protein resides in the centromere. It is found in the kinetochore. In terms of biological role, in complex with KIF18B, constitutes the major microtubule plus-end depolymerizing activity in mitotic cells. Regulates the turnover of microtubules at the kinetochore and functions in chromosome segregation during mitosis. Plays a role in chromosome congression and is required for the lateral to end-on conversion of the chromosome-microtubule attachment. The sequence is that of Kinesin-like protein KIF2C (KIF2C) from Cricetulus griseus (Chinese hamster).